Reading from the N-terminus, the 253-residue chain is Endonuclease NucS (253 aa).

This sequence belongs to the NucS endonuclease family.

The protein localises to the cytoplasm. Cleaves both 3' and 5' ssDNA extremities of branched DNA structures. The polypeptide is Endonuclease NucS (Pyrococcus horikoshii (strain ATCC 700860 / DSM 12428 / JCM 9974 / NBRC 100139 / OT-3)).